The following is a 298-amino-acid chain: Single myb histone 2 (298 aa).

Residues 1-61 form the HTH myb-type domain; that stretch reads MGVPKQRWTP…KWRNLSVTAG (61 aa). Positions 28–57 form a DNA-binding region, H-T-H motif; sequence WRTILRDSDFSALLRLRSNVDLKDKWRNLS. The H15 domain occupies 124-192; it reads SVARLDDLIV…KVNQKYRIAP (69 aa). Residues 237–278 are a coiled coil; that stretch reads EEAAAFAAKAVAEAEVAMAEAEEAARVAEAAENDAEAAKAFL.

This sequence belongs to the histone H1/H5 family. SMH subfamily. Forms a homodimer and heterodimers.

The protein resides in the nucleus. The protein localises to the chromosome. It is found in the nucleolus. Its subcellular location is the telomere. Binds preferentially double-stranded telomeric repeats, but may also bind to the single telomeric strand. This chain is Single myb histone 2 (SMH2), found in Zea mays (Maize).